The sequence spans 864 residues: Probable M1 family aminopeptidase 2 (864 aa).

Substrate contacts are provided by residues Glu-149 and 289 to 293; that span reads GAMEN. His-325 provides a ligand contact to Zn(2+). Residue Glu-326 is the Proton acceptor of the active site. Zn(2+)-binding residues include His-329 and Glu-348.

Belongs to the peptidase M1 family. The cofactor is Zn(2+).

The chain is Probable M1 family aminopeptidase 2 from Encephalitozoon cuniculi (strain GB-M1) (Microsporidian parasite).